Consider the following 462-residue polypeptide: Trigger factor (462 aa).

Positions G161 to A246 constitute a PPIase FKBP-type domain. A compositionally biased stretch (basic and acidic residues) spans S428–D437. The interval S428–E462 is disordered. A compositionally biased stretch (basic residues) spans K449–E462.

It belongs to the FKBP-type PPIase family. Tig subfamily.

It localises to the cytoplasm. It carries out the reaction [protein]-peptidylproline (omega=180) = [protein]-peptidylproline (omega=0). In terms of biological role, involved in protein export. Acts as a chaperone by maintaining the newly synthesized protein in an open conformation. Functions as a peptidyl-prolyl cis-trans isomerase. This is Trigger factor from Paramagnetospirillum magneticum (strain ATCC 700264 / AMB-1) (Magnetospirillum magneticum).